Here is a 405-residue protein sequence, read N- to C-terminus: Serine-type anaerobic sulfatase-maturating enzyme (405 aa).

The region spanning 18–249 (PRSPVPFHIL…QWRKRCDRGR (232 aa)) is the Radical SAM core domain. Residues Cys35 and Cys39 each contribute to the [4Fe-4S] cluster site. Residue Tyr41 coordinates S-adenosyl-L-methionine. Residue Cys42 coordinates [4Fe-4S] cluster. Positions 84, 140, and 152 each coordinate S-adenosyl-L-methionine. [4Fe-4S] cluster-binding residues include Cys270, Cys276, and Cys291. Asp292 acts as the Proton acceptor in catalysis. Cys331, Cys334, Cys340, Cys344, and Cys357 together coordinate [4Fe-4S] cluster.

This sequence belongs to the radical SAM superfamily. Anaerobic sulfatase-maturating enzyme family. In terms of assembly, monomer. Interacts with AtsA prior to its export to the periplasm. [4Fe-4S] cluster is required as a cofactor.

It localises to the cytoplasm. It catalyses the reaction L-seryl-[sulfatase] + S-adenosyl-L-methionine = 3-oxo-L-alanyl-[sulfatase] + 5'-deoxyadenosine + L-methionine + H(+). Its pathway is protein modification; sulfatase oxidation. Its function is as follows. Involved in 'Ser-type' sulfatase maturation under anaerobic conditions. Catalyzes the post-translational modification of serine ('Ser-72' in the arylsulfatase AtsA) into 3-oxoalanine (also known as C(alpha)-formylglycine (FGly)), by a free radical chemical mechanism initiated via the reductive cleavage of S-adenosyl-L-methionine (SAM). This is Serine-type anaerobic sulfatase-maturating enzyme from Klebsiella aerogenes (Enterobacter aerogenes).